The following is a 597-amino-acid chain: MARPKNVKYVFVTGGVISSLGKGILSASLGMLLKSRGLRVAIQKYDPYINVDPGTMSPYQHGEVYVTDDGAETDLDLGHYERFLDESTSQASNLTMGRVYKSVIDKERKGEYLGGTVQVVPHVIDEIKDRLAELAKKGNYDVIITEIGGTIGDIESLPFLEAMRQMKLDMGERNLLNIHLTFVPYIKAASELKTKPTQHSVKMLLETGIQPDILVCRSEKPLSREIKNKVGHFCNVNDLDVIGLNDCDTIYEVPLTLLQEKLDMRVLKKLGLKQYHEPDLAKWTDFCRKVKHPEGGEVNVAICGKYTEYPDAYKSILEALVHAGASNNVKVNIRLIRAEDGESKSYDFSKELAGINGILVAPGFGDRGIEGKIEFIRYAREQNIPFLGICLGMQCASVEFARNVCGLPDANSTEFNKRSRFPVIDLMEQQKKVKEKGGTMRLGSYPCIIREGTKAHAVYGKFLINERHRHRFEFNNTFRPAFEEHGMIFSGTSPNGELVEIIEIRDHRWFVAVQFHPELKSRVEKVHPLFHGFVGAAKAYADGVHQPELGARAEVHETPSPAPAPVQQGFAAGENIGTPSFFIEEERPAGDGGQGLS.

An amidoligase domain region spans residues 1-272 (MARPKNVKYV…DMRVLKKLGL (272 aa)). Position 18 (S18) interacts with CTP. S18 lines the UTP pocket. 19-24 (SLGKGI) lines the ATP pocket. Y59 lines the L-glutamine pocket. Residue D76 participates in ATP binding. The Mg(2+) site is built by D76 and E146. CTP-binding positions include 153-155 (DIE), 193-198 (KTKPTQ), and K229. UTP-binding positions include 193–198 (KTKPTQ) and K229. Positions 299–543 (NVAICGKYTE…VGAAKAYADG (245 aa)) constitute a Glutamine amidotransferase type-1 domain. G363 contributes to the L-glutamine binding site. The active-site Nucleophile; for glutamine hydrolysis is the C390. L-glutamine is bound by residues 391 to 394 (LGMQ), E414, and R471. Residues H516 and E518 contribute to the active site.

The protein belongs to the CTP synthase family. Homotetramer.

The enzyme catalyses UTP + L-glutamine + ATP + H2O = CTP + L-glutamate + ADP + phosphate + 2 H(+). The catalysed reaction is L-glutamine + H2O = L-glutamate + NH4(+). It carries out the reaction UTP + NH4(+) + ATP = CTP + ADP + phosphate + 2 H(+). Its pathway is pyrimidine metabolism; CTP biosynthesis via de novo pathway; CTP from UDP: step 2/2. Its activity is regulated as follows. Allosterically activated by GTP, when glutamine is the substrate; GTP has no effect on the reaction when ammonia is the substrate. The allosteric effector GTP functions by stabilizing the protein conformation that binds the tetrahedral intermediate(s) formed during glutamine hydrolysis. Inhibited by the product CTP, via allosteric rather than competitive inhibition. Catalyzes the ATP-dependent amination of UTP to CTP with either L-glutamine or ammonia as the source of nitrogen. Regulates intracellular CTP levels through interactions with the four ribonucleotide triphosphates. This is CTP synthase from Chlorobium luteolum (strain DSM 273 / BCRC 81028 / 2530) (Pelodictyon luteolum).